Consider the following 510-residue polypeptide: Histidine ammonia-lyase (510 aa).

Positions 145-147 form a cross-link, 5-imidazolinone (Ala-Gly); that stretch reads ASG. Position 146 is a 2,3-didehydroalanine (Ser) (serine 146).

Belongs to the PAL/histidase family. Contains an active site 4-methylidene-imidazol-5-one (MIO), which is formed autocatalytically by cyclization and dehydration of residues Ala-Ser-Gly.

Its subcellular location is the cytoplasm. It carries out the reaction L-histidine = trans-urocanate + NH4(+). It functions in the pathway amino-acid degradation; L-histidine degradation into L-glutamate; N-formimidoyl-L-glutamate from L-histidine: step 1/3. In Stigmatella aurantiaca, this protein is Histidine ammonia-lyase.